The chain runs to 250 residues: Superoxide dismutase 1 copper chaperone (250 aa).

Residues 4 to 67 (SFEIVFAVPM…AIQSTGKDAI (64 aa)) form the HMA domain. The Cu cation site is built by Cys-15, Cys-18, Cys-229, and Cys-231.

Belongs to the CCS1 family. Cu(2+) is required as a cofactor.

The protein resides in the cytoplasm. Its function is as follows. Copper chaperone for superoxide dismutase 1 (SOD1). Binds copper ions and delivers them specifically to SOD1. In Debaryomyces hansenii (strain ATCC 36239 / CBS 767 / BCRC 21394 / JCM 1990 / NBRC 0083 / IGC 2968) (Yeast), this protein is Superoxide dismutase 1 copper chaperone (CCS1).